We begin with the raw amino-acid sequence, 1359 residues long: DNA-directed RNA polymerase subunit beta (1359 aa).

It belongs to the RNA polymerase beta chain family. As to quaternary structure, the RNAP catalytic core consists of 2 alpha, 1 beta, 1 beta' and 1 omega subunit. When a sigma factor is associated with the core the holoenzyme is formed, which can initiate transcription.

It carries out the reaction RNA(n) + a ribonucleoside 5'-triphosphate = RNA(n+1) + diphosphate. DNA-dependent RNA polymerase catalyzes the transcription of DNA into RNA using the four ribonucleoside triphosphates as substrates. This chain is DNA-directed RNA polymerase subunit beta, found in Nitrosomonas eutropha (strain DSM 101675 / C91 / Nm57).